The chain runs to 310 residues: Porphobilinogen deaminase (310 aa).

An S-(dipyrrolylmethanemethyl)cysteine modification is found at Cys-242.

This sequence belongs to the HMBS family. Monomer. It depends on dipyrromethane as a cofactor.

It catalyses the reaction 4 porphobilinogen + H2O = hydroxymethylbilane + 4 NH4(+). It functions in the pathway porphyrin-containing compound metabolism; protoporphyrin-IX biosynthesis; coproporphyrinogen-III from 5-aminolevulinate: step 2/4. Functionally, tetrapolymerization of the monopyrrole PBG into the hydroxymethylbilane pre-uroporphyrinogen in several discrete steps. This Shewanella halifaxensis (strain HAW-EB4) protein is Porphobilinogen deaminase.